Here is a 361-residue protein sequence, read N- to C-terminus: 4-hydroxytryptamine kinase (361 aa).

ATP contacts are provided by residues Asn37, Lys57, and 118–120; that span reads QDV. Asp224 is a catalytic residue. Position 248–250 (248–250) interacts with ATP; that stretch reads DWE.

This sequence belongs to the methylthioribose kinase family. As to quaternary structure, monomer. Requires Mg(2+) as cofactor.

The enzyme catalyses 4-hydroxytryptamine + ATP = norbaeocystin + ADP + H(+). It catalyses the reaction psilocin + ATP = psilocybin + ADP + H(+). It carries out the reaction 4-hydroxy-N,N,N-trimethyltryptamine + ATP = aeruginascin + ADP + H(+). Its pathway is secondary metabolite biosynthesis. In terms of biological role, 4-hydroxytryptamine kinase; part of the gene cluster that mediates the biosynthesis of psilocybin, a psychotropic tryptamine-derived natural product. The first step in the pathway is the decarboxylation of L-tryptophan to tryptamine by the decarboxylase psiD. PsiD does not decarboxylate phenylalanine, tyrosine, or 5-hydroxy- L -tryptophan (5-HTP). 4-hydroxy-L-tryptophan is accepted as substrate by psiD as well. The cytochrome P450 monooxygenase psiH then converts tryptamine to 4-hydroxytryptamine. The kinase psiK catalyzes the 4-O-phosphorylation step by converting 4-hydroxytryptamine into norbaeocystin. The methyltransferase psiM then catalyzes iterative methyl transfer to the amino group of norbaeocystin to yield psilocybin via a monomethylated intermediate, baeocystin. 4-hydroxy-6-methyl-l-tryptophancan also be converted the decarboxylase PsiD, kinase PsiK, and methyltransferase PsiM into respectively 6-methyl-norbaeocystin, 6-methylbaeocystin, and 6-methylpsilocybin. PsiK kinase can also turn psilocin into psilocybin. This activity may represent a protective mechanism to rephosphorylate the unstable psilocin to the stable psilocybin in case of intracellular ester cleavage. Moreover, psiK is able to O-phosphorylate the quaternary amine 4-hydroxy-N,N,N-trimethyltryptamine (4-OH-TMT) to yield aeruginascin, another bioactive compound found in Psilocybe species. The sequence is that of 4-hydroxytryptamine kinase from Psilocybe cyanescens.